The sequence spans 185 residues: CD160 antigen (185 aa).

A signal peptide spans 1-27; that stretch reads MQRILMAPGQSCCALAILLAIVNFQHG. The Ig-like V-type domain maps to 28-136; sequence GCIHVTSSAS…HGHFLSVLVT (109 aa). 2 disulfides stabilise this stretch: Cys-47/Cys-115 and Cys-64/Cys-71. Asn-138 and Asn-156 each carry an N-linked (GlcNAc...) asparagine glycan. The GPI-anchor amidated serine moiety is linked to residue Ser-160. The propeptide at 161-185 is removed in mature form; sequence SGFLQVKAWGMLVTSLVALQALYTL.

Homomultimer; disulfide-linked. Interacts with classical and non-classical MHC class I molecules. Interacts with TNFRSF14 (via cysteine-rich domain 1); this interaction is direct. Interacts with LCK and CD247/CD3 zeta chain. As to expression, expressed in resting and activated NK cell subsets (at protein level). Expressed in resting NKT cells (at protein level). Expressed in activated CD8+ T cells (at protein level). Highly expressed in intraepithelial lymphocyte (IEL) subsets, particularly in innate-like CD8A-positive IELs (at protein level).

Its subcellular location is the cell membrane. The protein resides in the secreted. Functionally, receptor on immune cells capable to deliver stimulatory or inhibitory signals that regulate cell activation and differentiation. Exists as a GPI-anchored and as a transmembrane form, each likely initiating distinct signaling pathways via phosphoinositol 3-kinase in activated NK cells and via LCK and CD247/CD3 zeta chain in activated T cells. Receptor for both classical and non-classical MHC class I molecules. Receptor or ligand for TNF superfamily member TNFRSF14, participating in bidirectional cell-cell contact signaling between antigen presenting cells and lymphocytes. Upon ligation of TNFRSF14, provides stimulatory signal to NK cells enhancing IFNG production and anti-tumor immune response. On activated CD4+ T cells, interacts with TNFRSF14 and down-regulates CD28 costimulatory signaling, restricting memory and alloantigen-specific immune response. In the context of bacterial infection, acts as a ligand for TNFRSF14 on epithelial cells, triggering the production of antimicrobial proteins and pro-inflammatory cytokines. In terms of biological role, the soluble GPI-cleaved form, usually released by activated lymphocytes, might play an immune regulatory role by limiting lymphocyte effector functions. The chain is CD160 antigen from Mus musculus (Mouse).